We begin with the raw amino-acid sequence, 78 residues long: Large ribosomal subunit protein uL23 (78 aa).

It belongs to the universal ribosomal protein uL23 family. In terms of assembly, part of the 50S ribosomal subunit. Contacts protein L29.

Functionally, binds to 23S rRNA. One of the proteins that surrounds the polypeptide exit tunnel on the outside of the ribosome. The protein is Large ribosomal subunit protein uL23 of Nanoarchaeum equitans (strain Kin4-M).